The chain runs to 594 residues: F-box/LRR-repeat protein At3g58980 (594 aa).

Residues 1–49 enclose the F-box domain; that stretch reads MDRISNLPNEIICHIVSFLSAKEAAFASILSKRWRNLFTIVIKLQFDDS. LRR repeat units follow at residues 103-125, 128-151, 152-174, 203-218, 219-242, 249-272, 288-314, 315-339, 344-369, 403-414, 415-437, 450-474, 503-518, 519-541, and 584-594; these read ILDL…VFTC, LVKL…DAFL, PALE…AFEK, SPTL…DLYE, CEFT…AVPD, LDSL…GYVD, LRNV…AIPV, FKNL…FLPF, CPNL…VCHC, LEKLSGLKLVKL, HSLT…SSKC, LPSL…AFQK, SQTL…YWAE, HNLE…AHVP, and LRNVEILRLWM.

The protein is F-box/LRR-repeat protein At3g58980 of Arabidopsis thaliana (Mouse-ear cress).